Consider the following 808-residue polypeptide: Dynamin-related protein 3A (808 aa).

Residues 1-31 (MTIEEVSGETPPSTPPSSSTPSPSSSTTNAA) form a disordered region. The segment covering 16–28 (PSSSTPSPSSSTT) has biased composition (low complexity). Residues 56–330 (TIALPQVVVV…LVQHIKVLLP (275 aa)) enclose the Dynamin-type G domain. Positions 66 to 73 (GSQSSGKS) are G1 motif. 66 to 73 (GSQSSGKS) provides a ligand contact to GTP. A G2 motif region spans residues 92–94 (CTR). The interval 172–175 (DLPG) is G3 motif. Residues 172-176 (DLPGI) and 241-244 (TKLD) each bind GTP. A G4 motif region spans residues 241-244 (TKLD). The segment at 271 to 274 (VNRC) is G5 motif. Residues 548–578 (IPHPVARPKDTVEPDRTSSSTSQVKSRSFLG) are disordered. Positions 554–563 (RPKDTVEPDR) are enriched in basic and acidic residues. Over residues 564-575 (TSSSTSQVKSRS) the composition is skewed to low complexity. One can recognise a GED domain in the interval 670 to 761 (IQITKLLLRS…TLDELPLEAD (92 aa)). A disordered region spans residues 774 to 808 (LTSSKYSTSSSYSASPSTTRRSRRAGDQHQNGYGF). Residues 775–792 (TSSKYSTSSSYSASPSTT) show a composition bias toward low complexity.

The protein belongs to the TRAFAC class dynamin-like GTPase superfamily. Dynamin/Fzo/YdjA family. As to quaternary structure, homooligomer. Interacts with ARC5 on peroxisomes and ELM1 on mitochondria. In terms of tissue distribution, ubiquitous. Preferentially expressed in flowers.

It is found in the mitochondrion. The protein resides in the peroxisome. Involved in the control of mitochondrial and peroxisomal division and morphology. In association with PEX11C, PEX11D, PEX11E and FIS1B, is involved in cell cycle-associated constitutive self-replication of preexisting peroxisomes. This chain is Dynamin-related protein 3A (DRP3A), found in Arabidopsis thaliana (Mouse-ear cress).